A 61-amino-acid chain; its full sequence is UPF0434 protein Bpet2671 (61 aa).

Belongs to the UPF0434 family.

The polypeptide is UPF0434 protein Bpet2671 (Bordetella petrii (strain ATCC BAA-461 / DSM 12804 / CCUG 43448)).